The primary structure comprises 1744 residues: Complement C4-B (1744 aa).

A signal peptide spans 1 to 19 (MRLLWGLIWASSFFTLSLQ). Cys-68 and Cys-97 are joined by a disulfide. The N-linked (GlcNAc...) asparagine glycan is linked to Asn-226. Cys-635 and Cys-669 form a disulfide bridge. Positions 676-679 (RKKR) are excised as a propeptide. Intrachain disulfides connect Cys-702-Cys-728, Cys-703-Cys-735, and Cys-716-Cys-736. Positions 702–736 (CCQDGVTRLPMMRSCEQRAARVQQPDCREPFLSCC) constitute an Anaphylatoxin-like domain. A glycan (N-linked (GlcNAc...) asparagine) is linked at Asn-862. Ser-918 bears the Phosphoserine mark. Residues 1010–1013 (CGEQ) constitute a cross-link (isoglutamyl cysteine thioester (Cys-Gln)). Asn-1328 and Asn-1391 each carry an N-linked (GlcNAc...) asparagine glycan. Tyr-1417, Tyr-1420, and Tyr-1422 each carry sulfotyrosine. Positions 1447-1453 (RRNRRRR) are excised as a propeptide. Cystine bridges form between Cys-1471–Cys-1535, Cys-1583–Cys-1588, Cys-1595–Cys-1673, Cys-1618–Cys-1742, and Cys-1718–Cys-1727. Residues 1595–1742 (CPRQRRALER…FLQEYGTQGC (148 aa)) form the NTR domain.

As to quaternary structure, in absence of complement activation, circulates in blood as a disulfide-linked trimer of an alpha, beta and gamma chain. Complement C4b is composed of complement C4b-A, complement C4 beta and complement C4 gamma chains that are associated via disulfide bonds. Non-enzymatic component of the C3 convertase, also named C4bC2b, composed of the serine protease complement C2b (C2), as well as complement C4b. Non-enzymatic component of the C5 convertase, also named C4bC2bC3b, composed of the serine protease complement C2b (C2), complement C3b, as well as complement C4b. Interacts with CR1 (via Sushi 1 and Sushi 2 domains). In terms of assembly, (Microbial infection) Binds B.burgdorferi OspC, the interaction is inhibited by complement factor C2. This binding may inhibit the complement cascade and allow the bacteria to survive in the host bloodstream. In terms of processing, prior to secretion, the single-chain precursor is enzymatically cleaved by plasminogen (PLG) to yield non-identical chains alpha, beta and gamma. During activation of the complement systems, the alpha chain is cleaved into C4a and C4b by different proteases depending on the complement pathway: C4b stays linked to the beta and gamma chains, while C4a is released in the plasma. The alpha chain is cleaved by C1S to generate C4a and C4b following activation by the classical complement system. The alpha chain is cleaved to generate C4a and C4b by MASP2 following activation by the lectin complement system. The alpha chain is cleaved by GZMK to generate C4a and C4b following activation by the GZMK complement system. Further degradation of C4b by C1 into the inactive fragments C4c and C4d blocks the generation of C3 convertase. The proteolytic cleavages often are incomplete so that many structural forms can be found in plasma. Upon activation, the internal thioester bond reacts with carbohydrate antigens on the target surface to form amide or ester bonds, leading to covalent association with the surface of pathogens. Post-translationally, complement C4b interacts with complement C3b via a thioester linkage. In terms of processing, N- and O-glycosylated. O-glycosylated with a core 1 or possibly core 8 glycan. As to expression, complement component C4 is expressed at highest levels in the liver, at moderate levels in the adrenal cortex, adrenal medulla, thyroid gland, and the kidney, and at lowest levels in the heart, ovary, small intestine, thymus, pancreas and spleen. The extra-hepatic sites of expression may be important for the local protection and inflammatory response.

It is found in the secreted. Its subcellular location is the synapse. The protein resides in the cell projection. It localises to the axon. The protein localises to the dendrite. It is found in the cell surface. Its function is as follows. Precursor of non-enzymatic components of the classical, lectin and GZMK complement pathways, which consist in a cascade of proteins that leads to phagocytosis and breakdown of pathogens and signaling that strengthens the adaptive immune system. In terms of biological role, non-enzymatic component of C3 and C5 convertases. Generated following cleavage by complement proteases (C1S, MASP2 or GZMK, depending on the complement pathway), it covalently attaches to the surface of pathogens, where it acts as an opsonin that marks the surface of antigens for removal. It then recruits the serine protease complement C2b to form the C3 and C5 convertases, which cleave and activate C3 and C5, respectively, the next components of the complement pathways. Complement C4b-B isotype catalyzes the transacylation of the thioester carbonyl group to form ester bonds with carbohydrate antigens, while C4b-A isotype is responsible for effective binding to form amide bonds with immune aggregates or protein antigens. Putative humoral mediator released following cleavage by complement proteases (C1S, MASP2 or GZMK, depending on the complement pathway). While it is strongly similar to anaphylatoxins, its role is unclear. Was reported to act as a mediator of local inflammatory process; however these effects were probably due to contamination with C3a and/C5a anaphylatoxins in biological assays. This Homo sapiens (Human) protein is Complement C4-B.